A 476-amino-acid chain; its full sequence is GTPase Der (476 aa).

2 EngA-type G domains span residues 3–167 (FTVA…GEDM) and 205–380 (LRVA…KTWN). GTP-binding positions include 9-16 (GRPNVGKS), 56-60 (DTAGL), 119-122 (NKSE), 211-218 (GRPNAGKS), 258-262 (DTAGM), and 323-326 (NKWD). One can recognise a KH-like domain in the interval 381–465 (RRISTAKLNR…PIRVHYRGSD (85 aa)).

The protein belongs to the TRAFAC class TrmE-Era-EngA-EngB-Septin-like GTPase superfamily. EngA (Der) GTPase family. Associates with the 50S ribosomal subunit.

GTPase that plays an essential role in the late steps of ribosome biogenesis. The sequence is that of GTPase Der from Agrobacterium fabrum (strain C58 / ATCC 33970) (Agrobacterium tumefaciens (strain C58)).